We begin with the raw amino-acid sequence, 340 residues long: L-lysine 2,3-aminomutase (340 aa).

Residues 106–321 (RKYNNRILLL…SMISGFLVPK (216 aa)) enclose the Radical SAM core domain. Residues Cys-120, Cys-124, and Cys-127 each coordinate [4Fe-4S] cluster. At Lys-332 the chain carries N6-(pyridoxal phosphate)lysine.

Belongs to the radical SAM superfamily. KamA family. The cofactor is [4Fe-4S] cluster. Pyridoxal 5'-phosphate serves as cofactor.

The enzyme catalyses L-lysine = D-beta-lysine. Functionally, with EpmA is involved in the beta-lysylation step of the post-translational modification of translation elongation factor P (EF-P) on 'Lys-34'. EpmB appears to act before EpmA. Displays lysine 2,3-aminomutase activity, producing (R)-beta-lysine from (S)-alpha-lysine (L-lysine). The polypeptide is L-lysine 2,3-aminomutase (epmB) (Buchnera aphidicola subsp. Baizongia pistaciae (strain Bp)).